The following is a 522-amino-acid chain: MSSMQFSSVLPLEGKACISPVRREGSASERLKVGDSSSIRHERASRRMCNGGRGPAATGAQCVLTSDASPADTLVLRTSFRRNYADPNEVAAVILGGGTGTQLFPLTSTRATPAVPIGGCYRLIDIPMSNCFNSGINKIFVMTQFNSASLNRHIHRTYLGGGINFTDGSVEVLAATQMPGEAAGWFRGTADAVRKFIWVLEDYYKNKSIEHILILSGDQLYRMDYMELVQKHVDDNADITLSCAPVGESRASEYGLVKFDSSGRVVQFSEKPKGDDLEAMKVDTSFLNFAIDDPAKYPYIASMGVYVFKRDVLLNLLKSRYAELHDFGSEILPRALHDHNVQAYVFTDYWEDIGTIRSFFDANMALCEQPPKFEFYDPKTPFFTSPRYLPPTKSDKCRIKEAIISHGCFLRECKIEHSIIGVRSRLNSGSELKNAMMMGADSYETEDEISRLMSEGKVPIGVGENTKISNCIIDMNARIGRDVVISNKEGVQEADRPEEGYYIRSGIVVIQKNATIKDGTVV.

A chloroplast-targeting transit peptide spans 1–62; sequence MSSMQFSSVL…RGPAATGAQC (62 aa). A compositionally biased stretch (basic and acidic residues) spans 28 to 42; it reads SERLKVGDSSSIRHE. Residues 28–54 form a disordered region; sequence SERLKVGDSSSIRHERASRRMCNGGRG.

Belongs to the bacterial/plant glucose-1-phosphate adenylyltransferase family. As to quaternary structure, heterotetramer. As to expression, abundantly expressed in the whole grains, a slightly less abundant expression is seen in leaves, while a low level expression is seen in the roots. A greater expression is seen in the endosperm than in the embryo and pericarp layers.

It is found in the plastid. Its subcellular location is the chloroplast. The protein resides in the amyloplast. It catalyses the reaction alpha-D-glucose 1-phosphate + ATP + H(+) = ADP-alpha-D-glucose + diphosphate. Its pathway is glycan biosynthesis; starch biosynthesis. Insensitive to 3'phosphoglycerate and orthophosphate. This protein plays a role in synthesis of starch. It catalyzes the synthesis of the activated glycosyl donor, ADP-glucose from Glc-1-P and ATP. The sequence is that of Glucose-1-phosphate adenylyltransferase large subunit, chloroplastic/amyloplastic (AGP-L) from Triticum aestivum (Wheat).